The primary structure comprises 487 residues: N-succinylglutamate 5-semialdehyde dehydrogenase (487 aa).

Positions 1 to 23 (MTHFIKGQWQAGKGHDVTSSNPA) are disordered. 220-225 (GSSRTG) contacts NAD(+). Active-site residues include E243 and C277.

This sequence belongs to the aldehyde dehydrogenase family. AstD subfamily.

It catalyses the reaction N-succinyl-L-glutamate 5-semialdehyde + NAD(+) + H2O = N-succinyl-L-glutamate + NADH + 2 H(+). It participates in amino-acid degradation; L-arginine degradation via AST pathway; L-glutamate and succinate from L-arginine: step 4/5. Functionally, catalyzes the NAD-dependent reduction of succinylglutamate semialdehyde into succinylglutamate. In Shewanella sp. (strain ANA-3), this protein is N-succinylglutamate 5-semialdehyde dehydrogenase.